A 210-amino-acid polypeptide reads, in one-letter code: Large ribosomal subunit protein uL4 (210 aa).

The tract at residues 46 to 85 is disordered; that stretch reads QGTASTLTRSEVRGGGRKPYKQKGTGRARQGSIRTPLRPG. Residues 60–71 are compositionally biased toward basic residues; sequence GGRKPYKQKGTG.

This sequence belongs to the universal ribosomal protein uL4 family. As to quaternary structure, part of the 50S ribosomal subunit.

Functionally, one of the primary rRNA binding proteins, this protein initially binds near the 5'-end of the 23S rRNA. It is important during the early stages of 50S assembly. It makes multiple contacts with different domains of the 23S rRNA in the assembled 50S subunit and ribosome. In terms of biological role, forms part of the polypeptide exit tunnel. This Prochlorococcus marinus (strain AS9601) protein is Large ribosomal subunit protein uL4.